The chain runs to 721 residues: Rho GTPase-activating protein gacY (721 aa).

The segment at 1 to 325 (MDSSFKRASF…PQQPQQQQST (325 aa)) is disordered. Low complexity predominate over residues 17 to 33 (NIDNINEMNNNNMNTAP). The span at 34–44 (APAPAPIPTPQ) shows a compositional bias: pro residues. Low complexity predominate over residues 146 to 168 (DNNNNGNNNNNNNNNDNNNNNNN). Positions 169 to 181 (NDDDDEDEDDDEY) are enriched in acidic residues. Composition is skewed to polar residues over residues 182 to 202 (SNVSAPSWNSVLSKAKTNTMN) and 219 to 240 (KNDSGGENSANTTSEDGSSSRR). The span at 308–323 (QQQQQPQQPQQPQQQQ) shows a compositional bias: low complexity. The region spanning 363–520 (KSQRFPEIEA…AIMMHRPAGK (158 aa)) is the CRAL-TRIO domain. One can recognise a Rho-GAP domain in the interval 528–719 (APLEDVINRP…LILDNINILF (192 aa)).

It localises to the cytoplasm. Its function is as follows. Rho GTPase-activating protein involved in the signal transduction pathway. This Dictyostelium discoideum (Social amoeba) protein is Rho GTPase-activating protein gacY (gacY).